Here is a 183-residue protein sequence, read N- to C-terminus: uncharacterized protein (183 aa).

The protein belongs to the chlamydial CPn_0803/CT_584/TC_0873 family.

This is an uncharacterized protein from Chlamydia muridarum (strain MoPn / Nigg).